Reading from the N-terminus, the 1056-residue chain is Contactin-5 (1056 aa).

Positions 1–14 (MKADSSSSSSMSSR) are enriched in low complexity. Residues 1 to 33 (MKADSSSSSSMSSRMRLRNSHGVGSSSQDWSPF) form a disordered region. Positions 22–31 (GVGSSSQDWS) are enriched in polar residues. Ig-like C2-type domains lie at 57–142 (PVFI…IVLS), 154–240 (PFSG…RVLS), 258–343 (PKIE…GHLQ), 348–432 (PQWI…AELK), 438–519 (PMFN…AELT), and 527–622 (PMRV…AELL). 3 cysteine pairs are disulfide-bonded: Cys-81/Cys-131, Cys-175/Cys-227, and Cys-280/Cys-327. N-linked (GlcNAc...) asparagine glycans are attached at residues Asn-96 and Asn-119. Asn-355 carries an N-linked (GlcNAc...) asparagine glycan. 3 cysteine pairs are disulfide-bonded: Cys-369-Cys-416, Cys-459-Cys-507, and Cys-549-Cys-606. N-linked (GlcNAc...) asparagine glycosylation is found at Asn-489 and Asn-496. Fibronectin type-III domains are found at residues 629–727 (PPGV…TKEA), 732–829 (APAN…SAEG), 834–928 (PPSE…TKKN), and 933–1023 (PPGN…TSSG). Positions 711–736 (GTGDPSPPSRAVRTKEAVPSVAPANV) are disordered. 4 N-linked (GlcNAc...) asparagine glycosylation sites follow: Asn-772, Asn-887, Asn-945, and Asn-958. The GPI-anchor amidated asparagine moiety is linked to residue Asn-1035. Residues 1036–1056 (SPPGLAWTALFLSLMVPSFPL) constitute a propeptide, removed in mature form.

It belongs to the immunoglobulin superfamily. Contactin family.

It localises to the cell membrane. In terms of biological role, contactins mediate cell surface interactions during nervous system development. This chain is Contactin-5 (cntn5), found in Danio rerio (Zebrafish).